The chain runs to 401 residues: MQTLAGKKILLGISGGIAAYKCADLTRRLKERGAEVQVVMTKAAKEFITPLTMQAVSGRPVSDSLLDPAAEASMGHIELAKWADLILLAPATADLIARMAAGMGNDLLTTLVLATDAPVAVSPAMNQQMYRNVATQENIATLSRRGMEIWGPAAGEQACGDVGPGRMLEPMQLVALCEQFFQPKPLQDKSILITAGPTREAIDPVRYITNHSSGKMGYALAQAAMQLGANVTLVSGPVSLPTPVNVNRINVDSAQEMYDAVMAQASDHDIFISCAAVADYRPATIAEQKLKKTDDSDEMTITMVKNPDIVASVSAMTENRPFTVGFAAETNDVEVYARRKLEKKKLDLLCANDVSVEGQGFNSSDNAITLYWPQGEKALPLNSKAALSMEILKQIQTLMGH.

Residues 1–190 form a phosphopantothenoylcysteine decarboxylase region; the sequence is MQTLAGKKIL…FQPKPLQDKS (190 aa). Cys159 functions as the Proton donor in the catalytic mechanism. The tract at residues 191 to 401 is phosphopantothenate--cysteine ligase; it reads ILITAGPTRE…LKQIQTLMGH (211 aa). CTP contacts are provided by residues Asp279, Lys289, 307-310, Phe326, Lys340, and Lys344; that span reads PDIV.

The protein in the N-terminal section; belongs to the HFCD (homo-oligomeric flavin containing Cys decarboxylase) superfamily. In the C-terminal section; belongs to the PPC synthetase family. The cofactor is Mg(2+). FMN is required as a cofactor.

The catalysed reaction is N-[(R)-4-phosphopantothenoyl]-L-cysteine + H(+) = (R)-4'-phosphopantetheine + CO2. It catalyses the reaction (R)-4'-phosphopantothenate + L-cysteine + CTP = N-[(R)-4-phosphopantothenoyl]-L-cysteine + CMP + diphosphate + H(+). The protein operates within cofactor biosynthesis; coenzyme A biosynthesis; CoA from (R)-pantothenate: step 2/5. It functions in the pathway cofactor biosynthesis; coenzyme A biosynthesis; CoA from (R)-pantothenate: step 3/5. Catalyzes two sequential steps in the biosynthesis of coenzyme A. In the first step cysteine is conjugated to 4'-phosphopantothenate to form 4-phosphopantothenoylcysteine. In the second step the latter compound is decarboxylated to form 4'-phosphopantotheine. The protein is Coenzyme A biosynthesis bifunctional protein CoaBC of Vibrio vulnificus (strain YJ016).